Consider the following 64-residue polypeptide: Large ribosomal subunit protein uL29 (64 aa).

The protein belongs to the universal ribosomal protein uL29 family.

The sequence is that of Large ribosomal subunit protein uL29 from Polynucleobacter necessarius subsp. necessarius (strain STIR1).